A 361-amino-acid polypeptide reads, in one-letter code: Beta-hexosaminidase (361 aa).

Substrate-binding positions include Asp69, Arg77, Arg144, and 174-175 (KH). The active-site Proton donor/acceptor is the His187. Asp258 acts as the Nucleophile in catalysis.

The protein belongs to the glycosyl hydrolase 3 family. NagZ subfamily.

It localises to the cytoplasm. The catalysed reaction is Hydrolysis of terminal non-reducing N-acetyl-D-hexosamine residues in N-acetyl-beta-D-hexosaminides.. The protein operates within cell wall biogenesis; peptidoglycan recycling. Functionally, plays a role in peptidoglycan recycling by cleaving the terminal beta-1,4-linked N-acetylglucosamine (GlcNAc) from peptide-linked peptidoglycan fragments, giving rise to free GlcNAc, anhydro-N-acetylmuramic acid and anhydro-N-acetylmuramic acid-linked peptides. The sequence is that of Beta-hexosaminidase from Neisseria meningitidis serogroup C (strain 053442).